We begin with the raw amino-acid sequence, 137 residues long: Flagellar basal body rod protein FlgB (137 aa).

This sequence belongs to the flagella basal body rod proteins family. In terms of assembly, the basal body constitutes a major portion of the flagellar organelle and consists of a number of rings mounted on a central rod. In Gram-negative bacteria, at least four rings, L, P, S and M are present, whereas Gram-positive bacteria lack the L and P rings. The rod consists of about 26 subunits of FlgG in the distal portion, and FlgB, FlgC and FlgF build up the proximal portion of the rod with about 6 subunits each. Rod assembly occurs by export via the flagellum-specific pathway of its constituent proteins and by their incorporation into the rod structure in the probable order of FlgB, FlgC, FlgF and FlgG. Another protein, FliE, also assembles onto the stable rod structure.

It localises to the bacterial flagellum basal body. Functionally, structural component of flagellum, the bacterial motility apparatus. Part of the rod structure of flagellar basal body. In Yersinia ruckeri, this protein is Flagellar basal body rod protein FlgB.